The following is a 1102-amino-acid chain: Probable ubiquitin-conjugating enzyme E2 23 (1102 aa).

Disordered regions lie at residues 1-20, 25-111, 396-418, 579-602, 661-710, and 760-800; these read MEHE…DSSV, ASLS…DGNY, LPKV…PVHE, SPGN…SHQE, DESV…DIYA, and QAES…KNIL. Positions 31–44 are enriched in basic and acidic residues; that stretch reads DSEHPNIYRQDIVK. Acidic residues predominate over residues 59–88; it reads GDSDSDSDISDEEEDDDDDEDNDDDDEDVE. The segment covering 579–596 has biased composition (polar residues); it reads SPGNSFEEATQQDNGYQD. The span at 779-800 shows a compositional bias: polar residues; sequence SKVNVTDNCESKGTQANAKNIL. The UBC core domain occupies 850-1010; sequence QWFKKVDQDW…TFLLNCKTMM (161 aa). Cysteine 936 serves as the catalytic Glycyl thioester intermediate.

The protein belongs to the ubiquitin-conjugating enzyme family.

It catalyses the reaction S-ubiquitinyl-[E1 ubiquitin-activating enzyme]-L-cysteine + [E2 ubiquitin-conjugating enzyme]-L-cysteine = [E1 ubiquitin-activating enzyme]-L-cysteine + S-ubiquitinyl-[E2 ubiquitin-conjugating enzyme]-L-cysteine.. The protein operates within protein modification; protein ubiquitination. Accepts the ubiquitin from the E1 complex and catalyzes its covalent attachment to other proteins. This chain is Probable ubiquitin-conjugating enzyme E2 23 (UBC23), found in Arabidopsis thaliana (Mouse-ear cress).